The sequence spans 297 residues: 4-hydroxy-tetrahydrodipicolinate synthase (297 aa).

A pyruvate-binding site is contributed by Thr-47. Tyr-136 functions as the Proton donor/acceptor in the catalytic mechanism. The active-site Schiff-base intermediate with substrate is Lys-165. Ile-206 contacts pyruvate.

It belongs to the DapA family. Homotetramer; dimer of dimers.

Its subcellular location is the cytoplasm. It carries out the reaction L-aspartate 4-semialdehyde + pyruvate = (2S,4S)-4-hydroxy-2,3,4,5-tetrahydrodipicolinate + H2O + H(+). It functions in the pathway amino-acid biosynthesis; L-lysine biosynthesis via DAP pathway; (S)-tetrahydrodipicolinate from L-aspartate: step 3/4. Functionally, catalyzes the condensation of (S)-aspartate-beta-semialdehyde [(S)-ASA] and pyruvate to 4-hydroxy-tetrahydrodipicolinate (HTPA). The protein is 4-hydroxy-tetrahydrodipicolinate synthase of Campylobacter curvus (strain 525.92).